A 296-amino-acid polypeptide reads, in one-letter code: Decaprenyl diphosphate synthase (296 aa).

The disordered stretch occupies residues 1–58; the sequence is MVRNERTLKSTDFPQLPPAPDDYPTFPDKSTWPVVFPMLPPSPDGGPRRPPQHTSKAV. Residue D76 is part of the active site. D76 is a binding site for Mg(2+). Residues 77-80, W81, R89, H93, and 121-123 each bind substrate; these read GNGR and STE. N124 serves as the catalytic Proton acceptor. Residues W125, R127, R244, and 250-252 each bind substrate; that span reads RSS. E263 is a binding site for Mg(2+).

It belongs to the UPP synthase family. As to quaternary structure, homodimer. Mg(2+) is required as a cofactor.

The protein localises to the cell membrane. It carries out the reaction (2Z,6E)-farnesyl diphosphate + 7 isopentenyl diphosphate = (2Z,6Z,10Z,14Z,18Z,22Z,26Z,30Z,34E)-decaprenyl diphosphate + 7 diphosphate. The enzyme catalyses n isopentenyl diphosphate + (2E,6E)-farnesyl diphosphate = a di-trans,poly-cis-polyprenyl diphosphate + n diphosphate. In terms of biological role, catalyzes the sequential condensation of isopentenyl diphosphate (IPP) in the cis configuration with (2Z,6E)-farnesyl diphosphate (Z-FPP or EZ-FPP) generating the 50 carbon product trans,polycis-decaprenyl diphosphate. When (2E,6E)-farnesyl diphosphate (E-FPP or EE-FPP) is used in vitro, both primary products decaprenyl diphosphate and (2E,6E,10E)-geranylgeranyl diphosphate (EEE-GGPP) are synthesized. M.tuberculosis does not synthesize (2E,6E,10Z)-geranylgeranyl diphosphate (EEZ-GGPP) and heptaprenyl diphosphate. Can also accept many different allylic substrates, including E-geranyl diphosphate (E-GPP), neryl diphosphate (NPP), and all-trans-geranyl-geranyl diphosphate. This is Decaprenyl diphosphate synthase (uppS) from Mycobacterium leprae (strain TN).